A 608-amino-acid chain; its full sequence is UvrABC system protein C (608 aa).

Residues 13 to 91 enclose the GIY-YIG domain; sequence HKPGVYIMHD…IKKNSPKYNI (79 aa). One can recognise a UVR domain in the interval 202-237; that stretch reads DELTKKLTDKMMAASKNLNFELAAKLRDSITNIQVI.

Belongs to the UvrC family. In terms of assembly, interacts with UvrB in an incision complex.

The protein localises to the cytoplasm. Functionally, the UvrABC repair system catalyzes the recognition and processing of DNA lesions. UvrC both incises the 5' and 3' sides of the lesion. The N-terminal half is responsible for the 3' incision and the C-terminal half is responsible for the 5' incision. This Finegoldia magna (strain ATCC 29328 / DSM 20472 / WAL 2508) (Peptostreptococcus magnus) protein is UvrABC system protein C.